Here is a 169-residue protein sequence, read N- to C-terminus: Desumoylating isopeptidase 1 (169 aa).

Residues His-8–Asp-150 form the PPPDE domain. The active site involves His-39. The short motif at Ile-84 to Leu-92 is the Nuclear export signal 1 element. Cys-109 is an active-site residue. Positions Pro-140–Ile-154 match the Nuclear export signal 2 motif.

This sequence belongs to the DeSI family. Homodimer.

It is found in the cytoplasm. The protein localises to the nucleus. It catalyses the reaction S-hexadecanoyl-L-cysteinyl-[protein] + H2O = L-cysteinyl-[protein] + hexadecanoate + H(+). Its function is as follows. Protease which deconjugates SUMO1, SUMO2 and SUMO3 from some substrate proteins. Has isopeptidase but not SUMO-processing activity. Collaborates with ubqln4 in the export of ubiquitinated proteins from the nucleus to the cytoplasm. Exhibits palmitoyl protein thioesterase (S-depalmitoylation) activity towards synthetic substrates 4-methylumbelliferyl-6-S-palmitoyl-beta-D-glucopyranoside and S-depalmitoylation probe 5 (DPP-5). This Xenopus laevis (African clawed frog) protein is Desumoylating isopeptidase 1.